The primary structure comprises 160 residues: Cyanate hydratase (160 aa).

Catalysis depends on residues Arg100, Glu103, and Ser126.

It belongs to the cyanase family.

It carries out the reaction cyanate + hydrogencarbonate + 3 H(+) = NH4(+) + 2 CO2. In terms of biological role, catalyzes the reaction of cyanate with bicarbonate to produce ammonia and carbon dioxide. In Aspergillus niger (strain ATCC MYA-4892 / CBS 513.88 / FGSC A1513), this protein is Cyanate hydratase.